The sequence spans 401 residues: Chalcone synthase 1 (401 aa).

The active site involves cysteine 168.

The protein belongs to the thiolase-like superfamily. Chalcone/stilbene synthases family.

The catalysed reaction is (E)-4-coumaroyl-CoA + 3 malonyl-CoA + 3 H(+) = 2',4,4',6'-tetrahydroxychalcone + 3 CO2 + 4 CoA. Its pathway is secondary metabolite biosynthesis; flavonoid biosynthesis. The primary product of this enzyme is 4,2',4',6'-tetrahydroxychalcone (also termed naringenin-chalcone or chalcone) which can under specific conditions spontaneously isomerize into naringenin. The polypeptide is Chalcone synthase 1 (CHS1) (Sorghum bicolor (Sorghum)).